The chain runs to 431 residues: Adenylosuccinate synthetase (431 aa).

GTP-binding positions include glycine 13–lysine 19 and glycine 41–threonine 43. The Proton acceptor role is filled by aspartate 14. The Mg(2+) site is built by aspartate 14 and glycine 41. IMP is bound by residues aspartate 14–lysine 17, asparagine 39–histidine 42, threonine 130, arginine 144, glutamine 225, threonine 240, and arginine 304. Histidine 42 serves as the catalytic Proton donor. Residue serine 300–arginine 306 participates in substrate binding. Residues arginine 306, lysine 332 to aspartate 334, and serine 414 to glycine 416 each bind GTP.

This sequence belongs to the adenylosuccinate synthetase family. Homodimer. Requires Mg(2+) as cofactor.

Its subcellular location is the cytoplasm. The catalysed reaction is IMP + L-aspartate + GTP = N(6)-(1,2-dicarboxyethyl)-AMP + GDP + phosphate + 2 H(+). Its pathway is purine metabolism; AMP biosynthesis via de novo pathway; AMP from IMP: step 1/2. Its function is as follows. Plays an important role in the de novo pathway of purine nucleotide biosynthesis. Catalyzes the first committed step in the biosynthesis of AMP from IMP. The protein is Adenylosuccinate synthetase of Bordetella avium (strain 197N).